The following is a 484-amino-acid chain: Adenylosuccinate lyase (484 aa).

N-acetylalanine is present on alanine 2. Substrate is bound by residues 20 to 21 (RY), 85 to 87 (RHD), and 111 to 112 (TS). Position 147 is an N6-acetyllysine (lysine 147). The active-site Proton donor/acceptor is the histidine 159. Residue glutamine 241 coordinates substrate. Serine 289 acts as the Proton donor/acceptor in catalysis. Lysine 295 carries the post-translational modification N6-acetyllysine. Positions 303, 329, 334, and 338 each coordinate substrate. Residue lysine 415 forms a Glycyl lysine isopeptide (Lys-Gly) (interchain with G-Cter in SUMO1) linkage.

It belongs to the lyase 1 family. Adenylosuccinate lyase subfamily. In terms of assembly, homotetramer. Residues from neighboring subunits contribute catalytic and substrate-binding residues to each active site.

The enzyme catalyses N(6)-(1,2-dicarboxyethyl)-AMP = fumarate + AMP. It carries out the reaction (2S)-2-[5-amino-1-(5-phospho-beta-D-ribosyl)imidazole-4-carboxamido]succinate = 5-amino-1-(5-phospho-beta-D-ribosyl)imidazole-4-carboxamide + fumarate. It functions in the pathway purine metabolism; AMP biosynthesis via de novo pathway; AMP from IMP: step 2/2. It participates in purine metabolism; IMP biosynthesis via de novo pathway; 5-amino-1-(5-phospho-D-ribosyl)imidazole-4-carboxamide from 5-amino-1-(5-phospho-D-ribosyl)imidazole-4-carboxylate: step 2/2. Catalyzes two non-sequential steps in de novo AMP synthesis: converts (S)-2-(5-amino-1-(5-phospho-D-ribosyl)imidazole-4-carboxamido)succinate (SAICAR) to fumarate plus 5-amino-1-(5-phospho-D-ribosyl)imidazole-4-carboxamide, and thereby also contributes to de novo IMP synthesis, and converts succinyladenosine monophosphate (SAMP) to AMP and fumarate. The chain is Adenylosuccinate lyase (ADSL) from Macaca fascicularis (Crab-eating macaque).